Consider the following 97-residue polypeptide: Co-chaperonin GroES (97 aa).

It belongs to the GroES chaperonin family. As to quaternary structure, heptamer of 7 subunits arranged in a ring. Interacts with the chaperonin GroEL.

It localises to the cytoplasm. Its function is as follows. Together with the chaperonin GroEL, plays an essential role in assisting protein folding. The GroEL-GroES system forms a nano-cage that allows encapsulation of the non-native substrate proteins and provides a physical environment optimized to promote and accelerate protein folding. GroES binds to the apical surface of the GroEL ring, thereby capping the opening of the GroEL channel. The protein is Co-chaperonin GroES of Photorhabdus laumondii subsp. laumondii (strain DSM 15139 / CIP 105565 / TT01) (Photorhabdus luminescens subsp. laumondii).